Here is a 1037-residue protein sequence, read N- to C-terminus: Exportin-T (1037 aa).

This sequence belongs to the exportin family.

It is found in the nucleus. It localises to the cytoplasm. In terms of biological role, tRNA nucleus export receptor which facilitates tRNA translocation across the nuclear pore complex. Involved in pre-tRNA splicing, probably by affecting the interaction of pre-tRNA with splicing endonuclease. The chain is Exportin-T (los1) from Neosartorya fischeri (strain ATCC 1020 / DSM 3700 / CBS 544.65 / FGSC A1164 / JCM 1740 / NRRL 181 / WB 181) (Aspergillus fischerianus).